The sequence spans 128 residues: 3-aminoacrylate deaminase RutC (128 aa).

The protein belongs to the RutC family. Homotrimer.

The enzyme catalyses (Z)-3-aminoacrylate + H2O + H(+) = 3-oxopropanoate + NH4(+). In terms of biological role, involved in pyrimidine catabolism. Catalyzes the deamination of 3-aminoacrylate to malonic semialdehyde, a reaction that can also occur spontaneously. RutC may facilitate the reaction and modulate the metabolic fitness, rather than catalyzing essential functions. The polypeptide is 3-aminoacrylate deaminase RutC (Escherichia coli (strain SE11)).